A 415-amino-acid chain; its full sequence is U-box domain-containing protein 29 (415 aa).

A U-box domain is found at 11–85 (TVPSFFKCPI…NIWSDSIGRR (75 aa)). ARM repeat units follow at residues 221-263 (KSKL…TISK) and 265-307 (KRVR…TLSS).

Binds to SD129 and SD25.

The enzyme catalyses S-ubiquitinyl-[E2 ubiquitin-conjugating enzyme]-L-cysteine + [acceptor protein]-L-lysine = [E2 ubiquitin-conjugating enzyme]-L-cysteine + N(6)-ubiquitinyl-[acceptor protein]-L-lysine.. Its pathway is protein modification; protein ubiquitination. Functionally, functions as an E3 ubiquitin ligase. This chain is U-box domain-containing protein 29 (PUB29), found in Arabidopsis thaliana (Mouse-ear cress).